Consider the following 429-residue polypeptide: Glutamate-1-semialdehyde 2,1-aminomutase 2 (429 aa).

Lys-268 is subject to N6-(pyridoxal phosphate)lysine.

It belongs to the class-III pyridoxal-phosphate-dependent aminotransferase family. HemL subfamily. Homodimer. Pyridoxal 5'-phosphate is required as a cofactor.

The protein resides in the cytoplasm. It carries out the reaction (S)-4-amino-5-oxopentanoate = 5-aminolevulinate. It participates in porphyrin-containing compound metabolism; protoporphyrin-IX biosynthesis; 5-aminolevulinate from L-glutamyl-tRNA(Glu): step 2/2. The protein is Glutamate-1-semialdehyde 2,1-aminomutase 2 of Staphylococcus carnosus (strain TM300).